The chain runs to 649 residues: 70 kDa protein (649 aa).

Disordered stretches follow at residues leucine 28 to proline 80, alanine 257 to aspartate 286, threonine 311 to glutamine 359, and glutamine 458 to leucine 550. A compositionally biased stretch (polar residues) spans lysine 268–proline 279. Basic residues predominate over residues arginine 330–proline 349. Over residues aspartate 504–serine 515 the composition is skewed to polar residues. 2 stretches are compositionally biased toward low complexity: residues proline 524–glycine 533 and proline 540–leucine 550.

Belongs to the tymoviridae protein p69 family.

The sequence is that of 70 kDa protein from Solanum lycopersicum (Tomato).